A 152-amino-acid chain; its full sequence is Small ribosomal subunit protein uS19 (152 aa).

It belongs to the universal ribosomal protein uS19 family.

Functionally, protein S19 forms a complex with S13 that binds strongly to the 16S ribosomal RNA. This chain is Small ribosomal subunit protein uS19 (rps19), found in Methanocaldococcus jannaschii (strain ATCC 43067 / DSM 2661 / JAL-1 / JCM 10045 / NBRC 100440) (Methanococcus jannaschii).